The chain runs to 208 residues: FMN-dependent NADH:quinone oxidoreductase 1 (208 aa).

17–19 (SVS) serves as a coordination point for FMN.

It belongs to the azoreductase type 1 family. In terms of assembly, homodimer. FMN serves as cofactor.

The enzyme catalyses 2 a quinone + NADH + H(+) = 2 a 1,4-benzosemiquinone + NAD(+). It catalyses the reaction N,N-dimethyl-1,4-phenylenediamine + anthranilate + 2 NAD(+) = 2-(4-dimethylaminophenyl)diazenylbenzoate + 2 NADH + 2 H(+). Quinone reductase that provides resistance to thiol-specific stress caused by electrophilic quinones. In terms of biological role, also exhibits azoreductase activity. Catalyzes the reductive cleavage of the azo bond in aromatic azo compounds to the corresponding amines. This Listeria monocytogenes serotype 4b (strain F2365) protein is FMN-dependent NADH:quinone oxidoreductase 1.